The sequence spans 163 residues: Auxin-responsive protein IAA5 (163 aa).

Residues 15 to 19 carry the EAR-like (transcriptional repression) motif; the sequence is LRLGL. A PB1 domain is found at 74-160; that stretch reads SSYVKVSVDG…KRLRIMKRSC (87 aa).

This sequence belongs to the Aux/IAA family. As to quaternary structure, homodimers and heterodimers. As to expression, highly expressed in stems and flowers.

It localises to the nucleus. In terms of biological role, aux/IAA proteins are short-lived transcriptional factors that function as repressors of early auxin response genes at low auxin concentrations. Repression is thought to result from the interaction with auxin response factors (ARFs), proteins that bind to the auxin-responsive promoter element (AuxRE). Formation of heterodimers with ARF proteins may alter their ability to modulate early auxin response genes expression. The protein is Auxin-responsive protein IAA5 (IAA5) of Arabidopsis thaliana (Mouse-ear cress).